We begin with the raw amino-acid sequence, 176 residues long: Protein MOTHER of FT and TFL1 homolog 1 (176 aa).

The protein belongs to the phosphatidylethanolamine-binding protein family.

May form complexes with phosphorylated ligands by interfering with kinases and their effectors. The protein is Protein MOTHER of FT and TFL1 homolog 1 of Oryza sativa subsp. japonica (Rice).